The chain runs to 542 residues: DM7 family protein GG17591 (542 aa).

The span at 415-430 shows a compositional bias: basic and acidic residues; it reads GETQEMDEAHPTKEES. Residues 415 to 443 are disordered; sequence GETQEMDEAHPTKEESKSEEEGEVQSGSQ.

The protein belongs to the DM7 family.

This chain is DM7 family protein GG17591, found in Drosophila erecta (Fruit fly).